The following is a 650-amino-acid chain: DNA-directed RNA polymerase III subunit rpc3 (650 aa).

Disordered stretches follow at residues 133–163 (PTAVNGNHEQPEKEIEGEGVEGEGIEEEGHT), 264–283 (RGAKRRRGPGGAERSNKKAR), 288–313 (AVDEDEEEEEENEWSEDEMGGDNIPM), and 400–440 (LAGS…SSDG). Residues 149–158 (GEGVEGEGIE) show a composition bias toward acidic residues. Acidic residues predominate over residues 288–307 (AVDEDEEEEEENEWSEDEMG). The tract at residues 577 to 598 (TYKSMSRCLQRLRFERNRLKEF) is leucine-zipper.

This sequence belongs to the RNA polymerase beta chain family. As to quaternary structure, component of the RNA polymerase III (Pol III) complex consisting of 17 subunits.

It is found in the nucleus. Its function is as follows. DNA-dependent RNA polymerase catalyzes the transcription of DNA into RNA using the four ribonucleoside triphosphates as substrates. Specific core component of RNA polymerase III which synthesizes small RNAs, such as 5S rRNA and tRNAs. The sequence is that of DNA-directed RNA polymerase III subunit rpc3 (rpc82) from Aspergillus terreus (strain NIH 2624 / FGSC A1156).